We begin with the raw amino-acid sequence, 725 residues long: Ribosomal RNA large subunit methyltransferase K/L (725 aa).

The 112-residue stretch at V46–L157 folds into the THUMP domain. The tract at residues T393–A412 is disordered. The segment covering E395 to Q404 has biased composition (basic and acidic residues).

This sequence belongs to the methyltransferase superfamily. RlmKL family.

It localises to the cytoplasm. The enzyme catalyses guanosine(2445) in 23S rRNA + S-adenosyl-L-methionine = N(2)-methylguanosine(2445) in 23S rRNA + S-adenosyl-L-homocysteine + H(+). It catalyses the reaction guanosine(2069) in 23S rRNA + S-adenosyl-L-methionine = N(2)-methylguanosine(2069) in 23S rRNA + S-adenosyl-L-homocysteine + H(+). Functionally, specifically methylates the guanine in position 2445 (m2G2445) and the guanine in position 2069 (m7G2069) of 23S rRNA. The polypeptide is Ribosomal RNA large subunit methyltransferase K/L (Pseudomonas paraeruginosa (strain DSM 24068 / PA7) (Pseudomonas aeruginosa (strain PA7))).